The chain runs to 192 residues: Probable cobalt-precorrin-6B C(15)-methyltransferase (decarboxylating) (192 aa).

S-adenosyl-L-methionine contacts are provided by residues Thr-20, 44–48, Glu-68, and Ala-96; that span reads GSGTG.

The protein belongs to the methyltransferase superfamily. Archaeal-type CbiT family.

The catalysed reaction is Co-precorrin-6B + S-adenosyl-L-methionine = Co-precorrin-7 + S-adenosyl-L-homocysteine + CO2. Its pathway is cofactor biosynthesis; adenosylcobalamin biosynthesis; cob(II)yrinate a,c-diamide from sirohydrochlorin (anaerobic route): step 8/10. In terms of biological role, catalyzes the methylation of C-15 in cobalt-precorrin-6B followed by the decarboxylation of C-12 to form cobalt-precorrin-7. The chain is Probable cobalt-precorrin-6B C(15)-methyltransferase (decarboxylating) from Sulfurisphaera tokodaii (strain DSM 16993 / JCM 10545 / NBRC 100140 / 7) (Sulfolobus tokodaii).